The sequence spans 254 residues: Ciliary microtubule associated protein 1A (254 aa).

STPGR repeat units follow at residues 180–205 (PGPA…MAAR) and 216–241 (PGPG…FGIK). Residues 207–228 (EPPGDKTLKPGPGAHSPEKVTL) are disordered.

This sequence belongs to the CIMAP family. In terms of assembly, microtubule inner protein component of sperm flagellar doublet microtubules. As to expression, testis-specific (at protein level). Expression restricted to the germ cell fraction, absent in somatic cell fractions such as Sertoli and Leydig cells. Expression detected in the third week postpartum (23 days) after haploid germ cells developed, expression increased with age. Expressed in the tails of elongated spermatids sticking out toward the tubular lumen, and in cytoplasmic droplets still attached to the spermatid tail membrane. Expressed in the tails of mature sperm, from the connecting piece proximal to the head, along the middle and principal pieces, down to the distal end piece.

The protein localises to the cytoplasm. Its subcellular location is the cytoskeleton. It is found in the flagellum axoneme. Functionally, outer dense fibers are filamentous structures located on the outside of the axoneme in the midpiece and principal piece of the mammalian sperm tail. May help to maintain the passive elastic structures and elastic recoil of the sperm tail. The sequence is that of Ciliary microtubule associated protein 1A (Cimap1a) from Mus musculus (Mouse).